The following is a 378-amino-acid chain: Glycerate kinase (378 aa).

It belongs to the glycerate kinase type-1 family.

The enzyme catalyses (R)-glycerate + ATP = (2R)-3-phosphoglycerate + ADP + H(+). This Haemophilus influenzae (strain ATCC 51907 / DSM 11121 / KW20 / Rd) protein is Glycerate kinase (glxK).